The chain runs to 493 residues: Keratin, type II cuticular Hb3 (493 aa).

The tract at residues methionine 1–glutamate 111 is head. Positions glutamate 111–leucine 422 constitute an IF rod domain. The segment at lysine 112–tyrosine 146 is coil 1A. Residues glutamine 147–leucine 156 are linker 1. The coil 1B stretch occupies residues glutamate 157–alanine 257. A Glycyl lysine isopeptide (Lys-Gly) (interchain with G-Cter in SUMO1) cross-link involves residue lysine 217. Residues asparagine 258–leucine 274 form a linker 12 region. A coil 2 region spans residues asparagine 275–glutamate 418. The segment at glutamate 419–cysteine 493 is tail.

This sequence belongs to the intermediate filament family. As to quaternary structure, heterotetramer of two type I and two type II keratins.

The protein is Keratin, type II cuticular Hb3 of Bos taurus (Bovine).